A 444-amino-acid chain; its full sequence is Chromosomal replication initiator protein DnaA (444 aa).

Positions 1–73 (MDSSAQQLWH…AEVVQDIVGY (73 aa)) are domain I, interacts with DnaA modulators. The domain II stretch occupies residues 73–104 (YPVEIQLTAQQGDLIAIFQPHTSLESELSPTN). The tract at residues 105–321 (QLNPKYNFSR…GALIRATTYI (217 aa)) is domain III, AAA+ region. Residues Gly149, Gly151, Lys152, and Thr153 each contribute to the ATP site. Positions 322 to 444 (SISGLPMTVE…ERINSLSRNQ (123 aa)) are domain IV, binds dsDNA.

It belongs to the DnaA family. Oligomerizes as a right-handed, spiral filament on DNA at oriC.

It is found in the cytoplasm. In terms of biological role, plays an essential role in the initiation and regulation of chromosomal replication. ATP-DnaA binds to the origin of replication (oriC) to initiate formation of the DNA replication initiation complex once per cell cycle. Binds the DnaA box (a 9 base pair repeat at the origin) and separates the double-stranded (ds)DNA. Forms a right-handed helical filament on oriC DNA; dsDNA binds to the exterior of the filament while single-stranded (ss)DNA is stabiized in the filament's interior. The ATP-DnaA-oriC complex binds and stabilizes one strand of the AT-rich DNA unwinding element (DUE), permitting loading of DNA polymerase. After initiation quickly degrades to an ADP-DnaA complex that is not apt for DNA replication. Binds acidic phospholipids. The chain is Chromosomal replication initiator protein DnaA from Microcystis aeruginosa (strain NIES-843 / IAM M-2473).